The primary structure comprises 450 residues: Transcription factor SCREAM2 (450 aa).

Disordered stretches follow at residues methionine 1–aspartate 47, arginine 207–glutamate 231, and glycine 244–proline 265. The segment covering serine 209–serine 220 has biased composition (low complexity). A compositionally biased stretch (basic and acidic residues) spans serine 221–arginine 230. Residues glycine 263–leucine 312 form the bHLH domain. One can recognise an ACT domain in the interval asparagine 378–valine 450.

Homodimer. Heterodimers with SPCH, MUTE, and FAMA. In terms of tissue distribution, expressed constitutively in roots, leaves, stems, and flowers. Broad expression within stomatal cell lineages of leaf epidermis, except in mature guard-cells.

The protein localises to the nucleus. In terms of biological role, mediates stomatal differentiation in the epidermis probably by controlling successive roles of SPCH, MUTE, and FAMA. Functions as a dimer with SPCH during stomatal initiation. The sequence is that of Transcription factor SCREAM2 (SCRM2) from Arabidopsis thaliana (Mouse-ear cress).